Reading from the N-terminus, the 322-residue chain is ATP-dependent 6-phosphofructokinase (322 aa).

Glycine 11 is a binding site for ATP. Position 21 to 25 (21 to 25) interacts with ADP; sequence RAVVR. Residues 72 to 73 and 102 to 105 each bind ATP; these read RC and GDGS. Residue aspartate 103 participates in Mg(2+) binding. A substrate-binding site is contributed by 127-129; that stretch reads TID. Aspartate 129 serves as the catalytic Proton acceptor. Arginine 156 contacts ADP. Substrate-binding positions include arginine 164 and 171 to 173; that span reads MGR. ADP is bound by residues 187-189, arginine 213, and 215-217; these read GAE and KKH. Residues glutamate 224, arginine 245, and 251 to 254 each bind substrate; that span reads HVQR.

It belongs to the phosphofructokinase type A (PFKA) family. ATP-dependent PFK group I subfamily. Prokaryotic clade 'B1' sub-subfamily. Homotetramer. Mg(2+) serves as cofactor.

The protein resides in the cytoplasm. The enzyme catalyses beta-D-fructose 6-phosphate + ATP = beta-D-fructose 1,6-bisphosphate + ADP + H(+). The protein operates within carbohydrate degradation; glycolysis; D-glyceraldehyde 3-phosphate and glycerone phosphate from D-glucose: step 3/4. Its activity is regulated as follows. Allosterically activated by ADP and other diphosphonucleosides, and allosterically inhibited by phosphoenolpyruvate. Catalyzes the phosphorylation of D-fructose 6-phosphate to fructose 1,6-bisphosphate by ATP, the first committing step of glycolysis. The protein is ATP-dependent 6-phosphofructokinase of Staphylococcus aureus (strain JH1).